A 94-amino-acid polypeptide reads, in one-letter code: Integration host factor subunit beta (94 aa).

This sequence belongs to the bacterial histone-like protein family. In terms of assembly, heterodimer of an alpha and a beta chain.

This protein is one of the two subunits of integration host factor, a specific DNA-binding protein that functions in genetic recombination as well as in transcriptional and translational control. This is Integration host factor subunit beta from Pseudomonas paraeruginosa (strain DSM 24068 / PA7) (Pseudomonas aeruginosa (strain PA7)).